A 492-amino-acid chain; its full sequence is Protein nucleotidyltransferase YdiU (492 aa).

Residues Gly94, Gly96, Arg97, Lys117, Asp129, Gly130, Arg180, and Arg187 each coordinate ATP. The active-site Proton acceptor is Asp257. Residues Asn258 and Asp267 each coordinate Mg(2+). Residue Asp267 participates in ATP binding.

This sequence belongs to the SELO family. Requires Mg(2+) as cofactor. It depends on Mn(2+) as a cofactor.

The catalysed reaction is L-seryl-[protein] + ATP = 3-O-(5'-adenylyl)-L-seryl-[protein] + diphosphate. It carries out the reaction L-threonyl-[protein] + ATP = 3-O-(5'-adenylyl)-L-threonyl-[protein] + diphosphate. It catalyses the reaction L-tyrosyl-[protein] + ATP = O-(5'-adenylyl)-L-tyrosyl-[protein] + diphosphate. The enzyme catalyses L-histidyl-[protein] + UTP = N(tele)-(5'-uridylyl)-L-histidyl-[protein] + diphosphate. The catalysed reaction is L-seryl-[protein] + UTP = O-(5'-uridylyl)-L-seryl-[protein] + diphosphate. It carries out the reaction L-tyrosyl-[protein] + UTP = O-(5'-uridylyl)-L-tyrosyl-[protein] + diphosphate. Its function is as follows. Nucleotidyltransferase involved in the post-translational modification of proteins. It can catalyze the addition of adenosine monophosphate (AMP) or uridine monophosphate (UMP) to a protein, resulting in modifications known as AMPylation and UMPylation. The sequence is that of Protein nucleotidyltransferase YdiU from Halalkalibacterium halodurans (strain ATCC BAA-125 / DSM 18197 / FERM 7344 / JCM 9153 / C-125) (Bacillus halodurans).